Here is a 215-residue protein sequence, read N- to C-terminus: Cytochrome b6 (215 aa).

A helical transmembrane segment spans residues 32 to 52 (IFYCLGGITLTCFLVQVATGF). A heme c-binding site is contributed by cysteine 35. Heme b-binding residues include histidine 86 and histidine 100. The next 3 membrane-spanning stretches (helical) occupy residues 90–110 (ASMM…TGGF), 116–136 (LTWV…VTGY), and 186–206 (LHTF…FPMI). Residues histidine 187 and histidine 202 each contribute to the heme b site.

The protein belongs to the cytochrome b family. PetB subfamily. The 4 large subunits of the cytochrome b6-f complex are cytochrome b6, subunit IV (17 kDa polypeptide, PetD), cytochrome f and the Rieske protein, while the 4 small subunits are PetG, PetL, PetM and PetN. The complex functions as a dimer. The cofactor is heme b. Heme c is required as a cofactor.

It is found in the plastid. Its subcellular location is the chloroplast thylakoid membrane. Functionally, component of the cytochrome b6-f complex, which mediates electron transfer between photosystem II (PSII) and photosystem I (PSI), cyclic electron flow around PSI, and state transitions. The chain is Cytochrome b6 from Saccharum hybrid (Sugarcane).